An 89-amino-acid polypeptide reads, in one-letter code: Large ribosomal subunit protein bL27 (89 aa).

The interval 1 to 22 (MAHKKAGGSSRNGRDSAGRRLG) is disordered.

This sequence belongs to the bacterial ribosomal protein bL27 family.

This chain is Large ribosomal subunit protein bL27, found in Sphingopyxis alaskensis (strain DSM 13593 / LMG 18877 / RB2256) (Sphingomonas alaskensis).